The sequence spans 340 residues: tRNA N6-adenosine threonylcarbamoyltransferase (340 aa).

The Fe cation site is built by His-111 and His-115. Residues 134-138 (IISGA), Asp-167, Gly-180, and Asn-273 each bind substrate. Asp-301 provides a ligand contact to Fe cation.

This sequence belongs to the KAE1 / TsaD family. Requires Fe(2+) as cofactor.

The protein resides in the cytoplasm. It catalyses the reaction L-threonylcarbamoyladenylate + adenosine(37) in tRNA = N(6)-L-threonylcarbamoyladenosine(37) in tRNA + AMP + H(+). Functionally, required for the formation of a threonylcarbamoyl group on adenosine at position 37 (t(6)A37) in tRNAs that read codons beginning with adenine. Is involved in the transfer of the threonylcarbamoyl moiety of threonylcarbamoyl-AMP (TC-AMP) to the N6 group of A37, together with TsaE and TsaB. TsaD likely plays a direct catalytic role in this reaction. The protein is tRNA N6-adenosine threonylcarbamoyltransferase of Wigglesworthia glossinidia brevipalpis.